The sequence spans 494 residues: Glycerol kinase (494 aa).

Thr-13 serves as a coordination point for ADP. ATP contacts are provided by Thr-13, Thr-14, and Ser-15. Thr-13 lines the sn-glycerol 3-phosphate pocket. Residue Arg-17 coordinates ADP. Sn-glycerol 3-phosphate-binding residues include Arg-83, Glu-84, Tyr-135, and Asp-244. The glycerol site is built by Arg-83, Glu-84, Tyr-135, Asp-244, and Gln-245. The ADP site is built by Thr-266 and Gly-309. ATP-binding residues include Thr-266, Gly-309, Gln-313, and Gly-410. The ADP site is built by Gly-410 and Asn-414.

Belongs to the FGGY kinase family.

The catalysed reaction is glycerol + ATP = sn-glycerol 3-phosphate + ADP + H(+). It participates in polyol metabolism; glycerol degradation via glycerol kinase pathway; sn-glycerol 3-phosphate from glycerol: step 1/1. With respect to regulation, inhibited by fructose 1,6-bisphosphate (FBP). Its function is as follows. Key enzyme in the regulation of glycerol uptake and metabolism. Catalyzes the phosphorylation of glycerol to yield sn-glycerol 3-phosphate. This chain is Glycerol kinase, found in Shewanella oneidensis (strain ATCC 700550 / JCM 31522 / CIP 106686 / LMG 19005 / NCIMB 14063 / MR-1).